The sequence spans 492 residues: Catalase isozyme 2 (492 aa).

Residues H65 and N138 contribute to the active site. Y348 lines the heme pocket.

Belongs to the catalase family. In terms of assembly, homotetramer. The cofactor is heme.

Its subcellular location is the peroxisome. The catalysed reaction is 2 H2O2 = O2 + 2 H2O. Occurs in almost all aerobically respiring organisms and serves to protect cells from the toxic effects of hydrogen peroxide. This is Catalase isozyme 2 (CAT2) from Nicotiana plumbaginifolia (Leadwort-leaved tobacco).